A 135-amino-acid polypeptide reads, in one-letter code: uncharacterized protein (135 aa).

Positions 1 to 75 (MAAATETGQA…PPPRPPQRRC (75 aa)) are disordered.

This is an uncharacterized protein from Homo sapiens (Human).